Here is a 164-residue protein sequence, read N- to C-terminus: FMN reductase (NADH) RutF (164 aa).

This sequence belongs to the non-flavoprotein flavin reductase family. RutF subfamily.

The catalysed reaction is FMNH2 + NAD(+) = FMN + NADH + 2 H(+). Catalyzes the reduction of FMN to FMNH2 which is used to reduce pyrimidine by RutA via the Rut pathway. In Klebsiella pneumoniae (strain 342), this protein is FMN reductase (NADH) RutF.